Consider the following 201-residue polypeptide: Glycerol-3-phosphate acyltransferase (201 aa).

5 helical membrane-spanning segments follow: residues 10 to 30 (MLIGALIFGYVLGSIPFGLIL), 60 to 80 (LAAATLILDALKGTAAALIAA), 86 to 106 (AAIAAGFGAFIGHLFPVWIGF), 116 to 136 (LGVLIGLAWAGALVFAAAWIV), and 166 to 186 (ALAALFAIMTVIVFIKHRANI).

This sequence belongs to the PlsY family. In terms of assembly, probably interacts with PlsX.

It localises to the cell inner membrane. It catalyses the reaction an acyl phosphate + sn-glycerol 3-phosphate = a 1-acyl-sn-glycero-3-phosphate + phosphate. Its pathway is lipid metabolism; phospholipid metabolism. Functionally, catalyzes the transfer of an acyl group from acyl-phosphate (acyl-PO(4)) to glycerol-3-phosphate (G3P) to form lysophosphatidic acid (LPA). This enzyme utilizes acyl-phosphate as fatty acyl donor, but not acyl-CoA or acyl-ACP. The protein is Glycerol-3-phosphate acyltransferase of Brucella canis (strain ATCC 23365 / NCTC 10854 / RM-666).